A 201-amino-acid polypeptide reads, in one-letter code: Holliday junction resolvase RecU (201 aa).

The disordered stretch occupies residues Met1–Pro26. Residues Thr87, Asp89, Glu102, and Gln121 each contribute to the Mg(2+) site.

This sequence belongs to the RecU family. Requires Mg(2+) as cofactor.

It is found in the cytoplasm. The enzyme catalyses Endonucleolytic cleavage at a junction such as a reciprocal single-stranded crossover between two homologous DNA duplexes (Holliday junction).. Endonuclease that resolves Holliday junction intermediates in genetic recombination. Cleaves mobile four-strand junctions by introducing symmetrical nicks in paired strands. Promotes annealing of linear ssDNA with homologous dsDNA. Required for DNA repair, homologous recombination and chromosome segregation. This chain is Holliday junction resolvase RecU, found in Listeria monocytogenes serotype 4a (strain HCC23).